The chain runs to 792 residues: Phenylalanine--tRNA ligase beta subunit (792 aa).

The tRNA-binding domain occupies 39–147 (GEALDLILVA…EDAPIGTPLA (109 aa)). One can recognise a B5 domain in the interval 400–475 (PAPASILLRR…RIRGYEHLPT (76 aa)). D453, D459, E462, and E463 together coordinate Mg(2+). One can recognise an FDX-ACB domain in the interval 698-791 (SRFPFVRRDL…IQQRHDVRIR (94 aa)).

It belongs to the phenylalanyl-tRNA synthetase beta subunit family. Type 1 subfamily. In terms of assembly, tetramer of two alpha and two beta subunits. The cofactor is Mg(2+).

It is found in the cytoplasm. The catalysed reaction is tRNA(Phe) + L-phenylalanine + ATP = L-phenylalanyl-tRNA(Phe) + AMP + diphosphate + H(+). The chain is Phenylalanine--tRNA ligase beta subunit from Xylella fastidiosa (strain Temecula1 / ATCC 700964).